The following is a 431-amino-acid chain: Serine/threonine-protein kinase Sgk1 (431 aa).

Residues 1 to 60 (MTVKTEAAKGTLTYSRMRGMVAILIAFMKQRRMGLNDFIQKIANNSYACKHPEVQSILKI) form a necessary for localization to the mitochondria region. Residues 66–92 (PELMNANPSPPPSPSQQINLGPSSNPH) are disordered. Serine 74 is modified (phosphoserine). Serine 78 is subject to Phosphoserine; by MAPK7. Polar residues predominate over residues 81-91 (QQINLGPSSNP). The Protein kinase domain occupies 98–355 (FHFLKVIGKG…FMEIKSHVFF (258 aa)). ATP contacts are provided by residues 104–112 (IGKGSFGKV) and lysine 127. Residues 131 to 141 (KKAILKKKEEK) carry the Nuclear localization signal motif. Aspartate 222 functions as the Proton acceptor in the catalytic mechanism. Threonine 256 is modified (phosphothreonine; by PDPK1). In terms of domain architecture, AGC-kinase C-terminal spans 356 to 431 (SLINWDDLIN…SYAPPTDSFL (76 aa)). Phosphothreonine; by PKA is present on threonine 369. Phosphoserine occurs at positions 397, 401, and 422.

It belongs to the protein kinase superfamily. AGC Ser/Thr protein kinase family. In terms of assembly, homodimer; disulfide-linked. Forms a trimeric complex with FBXW7 and NOTCH1. Interacts with MAPK3/ERK1, MAPK1/ERK2, MAP2K1/MEK1, MAP2K2/MEK2, NEDD4, NEDD4L, MAPT/TAU, MAPK7, CREB1, SLC9A3R2/NHERF2 and KCNJ1/ROMK1. Associates with the mammalian target of rapamycin complex 2 (mTORC2) via an interaction with MAPKAP1/SIN1. In terms of processing, regulated by phosphorylation. Activated by phosphorylation on Ser-422 by mTORC2, transforming it into a substrate for PDPK1 which phosphorylates it on Thr-256. Phosphorylation on Ser-397 and Ser-401 are also essential for its activity. Phosphorylation on Ser-78 by MAPK7 is required for growth factor-induced cell cycle progression. Ubiquitinated by NEDD4L; which promotes proteasomal degradation. Ubiquitinated by SYVN1 at the endoplasmic reticulum; which promotes rapid proteasomal degradation and maintains a high turnover rate in resting cells. Isoform 2 shows enhanced stability. Expressed in most tissues with highest levels in the pancreas, followed by placenta, kidney and lung. Isoform 2 is strongly expressed in brain and pancreas, weaker in heart, placenta, lung, liver and skeletal muscle.

Its subcellular location is the cytoplasm. The protein localises to the nucleus. It localises to the endoplasmic reticulum membrane. The protein resides in the cell membrane. It is found in the mitochondrion. The enzyme catalyses L-seryl-[protein] + ATP = O-phospho-L-seryl-[protein] + ADP + H(+). It catalyses the reaction L-threonyl-[protein] + ATP = O-phospho-L-threonyl-[protein] + ADP + H(+). Its activity is regulated as follows. Two specific sites, one in the kinase domain (Thr-256) and the other in the C-terminal regulatory region (Ser-422), need to be phosphorylated for its full activation. Phosphorylation at Ser-397 and Ser-401 are also essential for its activity. Activated by WNK1, WNK2, WNK3 and WNK4; which promote phosphorylation by mTORC2. Its function is as follows. Serine/threonine-protein kinase which is involved in the regulation of a wide variety of ion channels, membrane transporters, cellular enzymes, transcription factors, neuronal excitability, cell growth, proliferation, survival, migration and apoptosis. Plays an important role in cellular stress response. Contributes to regulation of renal Na(+) retention, renal K(+) elimination, salt appetite, gastric acid secretion, intestinal Na(+)/H(+) exchange and nutrient transport, insulin-dependent salt sensitivity of blood pressure, salt sensitivity of peripheral glucose uptake, cardiac repolarization and memory consolidation. Up-regulates Na(+) channels: SCNN1A/ENAC, SCN5A and ASIC1/ACCN2, K(+) channels: KCNJ1/ROMK1, KCNA1-5, KCNQ1-5 and KCNE1, epithelial Ca(2+) channels: TRPV5 and TRPV6, chloride channels: BSND, CLCN2 and CFTR, glutamate transporters: SLC1A3/EAAT1, SLC1A2 /EAAT2, SLC1A1/EAAT3, SLC1A6/EAAT4 and SLC1A7/EAAT5, amino acid transporters: SLC1A5/ASCT2, SLC38A1/SN1 and SLC6A19, creatine transporter: SLC6A8, Na(+)/dicarboxylate cotransporter: SLC13A2/NADC1, Na(+)-dependent phosphate cotransporter: SLC34A2/NAPI-2B, glutamate receptor: GRIK2/GLUR6. Up-regulates carriers: SLC9A3/NHE3, SLC12A1/NKCC2, SLC12A3/NCC, SLC5A3/SMIT, SLC2A1/GLUT1, SLC5A1/SGLT1 and SLC15A2/PEPT2. Regulates enzymes: GSK3A/B, PMM2 and Na(+)/K(+) ATPase, and transcription factors: CTNNB1 and nuclear factor NF-kappa-B. Stimulates sodium transport into epithelial cells by enhancing the stability and expression of SCNN1A/ENAC. This is achieved by phosphorylating the NEDD4L ubiquitin E3 ligase, promoting its interaction with 14-3-3 proteins, thereby preventing it from binding to SCNN1A/ENAC and targeting it for degradation. Regulates store-operated Ca(+2) entry (SOCE) by stimulating ORAI1 and STIM1. Regulates KCNJ1/ROMK1 directly via its phosphorylation or indirectly via increased interaction with SLC9A3R2/NHERF2. Phosphorylates MDM2 and activates MDM2-dependent ubiquitination of p53/TP53. Phosphorylates MAPT/TAU and mediates microtubule depolymerization and neurite formation in hippocampal neurons. Phosphorylates SLC2A4/GLUT4 and up-regulates its activity. Phosphorylates APBB1/FE65 and promotes its localization to the nucleus. Phosphorylates MAPK1/ERK2 and activates it by enhancing its interaction with MAP2K1/MEK1 and MAP2K2/MEK2. Phosphorylates FBXW7 and plays an inhibitory role in the NOTCH1 signaling. Phosphorylates FOXO1 resulting in its relocalization from the nucleus to the cytoplasm. Phosphorylates FOXO3, promoting its exit from the nucleus and interference with FOXO3-dependent transcription. Phosphorylates BRAF and MAP3K3/MEKK3 and inhibits their activity. Phosphorylates SLC9A3/NHE3 in response to dexamethasone, resulting in its activation and increased localization at the cell membrane. Phosphorylates CREB1. Necessary for vascular remodeling during angiogenesis. Sustained high levels and activity may contribute to conditions such as hypertension and diabetic nephropathy. Isoform 2 exhibited a greater effect on cell plasma membrane expression of SCNN1A/ENAC and Na(+) transport than isoform 1. The sequence is that of Serine/threonine-protein kinase Sgk1 (SGK1) from Homo sapiens (Human).